The chain runs to 100 residues: Large ribosomal subunit protein uL23 (100 aa).

Belongs to the universal ribosomal protein uL23 family. Part of the 50S ribosomal subunit. Contacts protein L29, and trigger factor when it is bound to the ribosome.

Functionally, one of the early assembly proteins it binds 23S rRNA. One of the proteins that surrounds the polypeptide exit tunnel on the outside of the ribosome. Forms the main docking site for trigger factor binding to the ribosome. This Mycobacterium ulcerans (strain Agy99) protein is Large ribosomal subunit protein uL23.